A 483-amino-acid chain; its full sequence is Probable cobyric acid synthase (483 aa).

A GATase cobBQ-type domain is found at E247–F433. C325 serves as the catalytic Nucleophile. The active site involves H425.

The protein belongs to the CobB/CobQ family. CobQ subfamily.

Its pathway is cofactor biosynthesis; adenosylcobalamin biosynthesis. Catalyzes amidations at positions B, D, E, and G on adenosylcobyrinic A,C-diamide. NH(2) groups are provided by glutamine, and one molecule of ATP is hydrogenolyzed for each amidation. In Thermococcus gammatolerans (strain DSM 15229 / JCM 11827 / EJ3), this protein is Probable cobyric acid synthase.